The sequence spans 396 residues: Dual specificity mitogen-activated protein kinase kinase dSOR1 (396 aa).

The disordered stretch occupies residues alanine 25–lysine 44. One can recognise a Protein kinase domain in the interval leucine 87 to isoleucine 364. ATP is bound by residues leucine 93 to valine 101 and lysine 116. Aspartate 209 serves as the catalytic Proton acceptor. Serine 237 and serine 241 each carry phosphoserine; by RAF.

It belongs to the protein kinase superfamily. STE Ser/Thr protein kinase family. MAP kinase kinase subfamily. As to quaternary structure, interacts with Raf and ksr; Dsor1 binding to ksr probably promotes ksr and Raf dimerization and ksr-mediated Raf transactivation. In terms of processing, phosphorylation on Ser/Thr by MAP kinase kinase kinases regulates positively the kinase activity.

It catalyses the reaction L-seryl-[protein] + ATP = O-phospho-L-seryl-[protein] + ADP + H(+). The enzyme catalyses L-threonyl-[protein] + ATP = O-phospho-L-threonyl-[protein] + ADP + H(+). It carries out the reaction L-tyrosyl-[protein] + ATP = O-phospho-L-tyrosyl-[protein] + ADP + H(+). In terms of biological role, required downstream of Raf in the sevenless (sev), torso (tor), and Drosophila EGF receptor homolog (DER) signal transduction pathways. Involved in both positive regulation (at the posterior terminus) and negative regulation (at the anterior domain) of tll, as in other terminal class gene products, maybe via the ERK-A kinase. The protein is Dual specificity mitogen-activated protein kinase kinase dSOR1 (Dsor1) of Drosophila melanogaster (Fruit fly).